A 320-amino-acid polypeptide reads, in one-letter code: uncharacterized protein (320 aa).

The FHA domain occupies 22 to 86 (KTIGRSSSFD…IRDLNNKTGT (65 aa)). The disordered stretch occupies residues 242 to 264 (TDTDTTEEKEEEEEKEEGDDEEG).

This is an uncharacterized protein from Saccharomyces cerevisiae (strain ATCC 204508 / S288c) (Baker's yeast).